The following is a 288-amino-acid chain: Quinate/shikimate dehydrogenase (288 aa).

Positions 71 and 107 each coordinate substrate. NAD(+)-binding positions include alanine 132–alanine 135, asparagine 155–aspartate 158, lysine 205, cysteine 232–asparagine 235, and glycine 255.

Belongs to the shikimate dehydrogenase family. As to quaternary structure, homodimer.

It catalyses the reaction L-quinate + NAD(+) = 3-dehydroquinate + NADH + H(+). The catalysed reaction is L-quinate + NADP(+) = 3-dehydroquinate + NADPH + H(+). The enzyme catalyses shikimate + NADP(+) = 3-dehydroshikimate + NADPH + H(+). It carries out the reaction shikimate + NAD(+) = 3-dehydroshikimate + NADH + H(+). It functions in the pathway metabolic intermediate biosynthesis; chorismate biosynthesis; chorismate from D-erythrose 4-phosphate and phosphoenolpyruvate: step 4/7. The actual biological function of YdiB remains unclear, nor is it known whether 3-dehydroshikimate or quinate represents the natural substrate. Catalyzes the reversible NAD-dependent reduction of both 3-dehydroshikimate (DHSA) and 3-dehydroquinate to yield shikimate (SA) and quinate, respectively. It can use both NAD or NADP for catalysis, however it has higher catalytic efficiency with NAD. This Shigella sonnei (strain Ss046) protein is Quinate/shikimate dehydrogenase.